Consider the following 59-residue polypeptide: UPF0434 protein VS_2060 (59 aa).

Belongs to the UPF0434 family.

The polypeptide is UPF0434 protein VS_2060 (Vibrio atlanticus (strain LGP32) (Vibrio splendidus (strain Mel32))).